A 117-amino-acid chain; its full sequence is MTILLSSNFLNHKTLLCSIDSAVTLFMETMMPSDVLCLLQDSLISFCKINLATTRGIFSIRWARTTSHSMNQYLSLNVAILIQENHHRDTRNVNAQYLSTSQRSRLYTCISINIYFK.

This is an uncharacterized protein from Microplitis demolitor bracovirus (isolate Webb) (MdBV).